The primary structure comprises 140 residues: Transcription antitermination protein NusB (140 aa).

The protein belongs to the NusB family.

Involved in transcription antitermination. Required for transcription of ribosomal RNA (rRNA) genes. Binds specifically to the boxA antiterminator sequence of the ribosomal RNA (rrn) operons. The chain is Transcription antitermination protein NusB from Streptococcus pneumoniae (strain 70585).